Consider the following 396-residue polypeptide: Pre-mRNA-splicing regulator WTAP (396 aa).

At M1 the chain carries N-acetylmethionine. A Phosphoserine modification is found at S14. Composition is skewed to low complexity over residues 240-257 (QQQQSQASAPSTSRTTSS) and 278-291 (SNGSSSRQRTSGSG). The segment at 240–396 (QQQQSQASAP…SSVNVQGAVL (157 aa)) is disordered. 4 positions are modified to phosphoserine: S297, S305, S306, and S341. Low complexity predominate over residues 305–316 (SSSGNGNKASNS). Residues 340 to 351 (DSPTGSENSLTH) are compositionally biased toward polar residues. Phosphothreonine is present on T350. Residues 352–368 (HSNDTDSSHDPQEEKAV) show a composition bias toward basic and acidic residues. The segment covering 380–396 (HVQNGLDSSVNVQGAVL) has biased composition (polar residues). S388 bears the Phosphoserine mark.

The protein belongs to the fl(2)d family. As to quaternary structure, component of the WMM complex, a N6-methyltransferase complex composed of a catalytic subcomplex, named MAC, and of an associated subcomplex, named MACOM. The MAC subcomplex is composed of METTL3 and METTL14. The MACOM subcomplex is composed of WTAP, ZC3H13, CBLL1/HAKAI, VIRMA, and, in some cases of RBM15 (RBM15 or RBM15B). Interacts with WT1. Also a component of a MACOM-like complex, named WTAP complex, composed of WTAP, ZC3H13, CBLL1, VIRMA, RBM15, BCLAF1 and THRAP3. Interacts with CPNE4 (via VWFA domain).

It localises to the nucleus speckle. The protein resides in the nucleus. The protein localises to the nucleoplasm. It is found in the cytoplasm. Its function is as follows. Associated component of the WMM complex, a complex that mediates N6-methyladenosine (m6A) methylation of RNAs, a modification that plays a role in the efficiency of mRNA splicing and RNA processing. Acts as a key regulator of m6A methylation by promoting m6A methylation of mRNAs at the 3'-UTR. Required for accumulation of METTL3 and METTL14 to nuclear speckle. Acts as a mRNA splicing regulator. Regulates G2/M cell-cycle transition by binding to the 3' UTR of CCNA2, which enhances its stability. Impairs WT1 DNA-binding ability and inhibits expression of WT1 target genes. This chain is Pre-mRNA-splicing regulator WTAP, found in Mus musculus (Mouse).